We begin with the raw amino-acid sequence, 219 residues long: Ribose-5-phosphate isomerase A (219 aa).

Substrate contacts are provided by residues 28–31 (TGST), 81–84 (DGAD), and 94–97 (KGGG). Catalysis depends on E103, which acts as the Proton acceptor. K121 serves as a coordination point for substrate.

The protein belongs to the ribose 5-phosphate isomerase family. In terms of assembly, homodimer.

The catalysed reaction is aldehydo-D-ribose 5-phosphate = D-ribulose 5-phosphate. It functions in the pathway carbohydrate degradation; pentose phosphate pathway; D-ribose 5-phosphate from D-ribulose 5-phosphate (non-oxidative stage): step 1/1. Its function is as follows. Catalyzes the reversible conversion of ribose-5-phosphate to ribulose 5-phosphate. This Shewanella frigidimarina (strain NCIMB 400) protein is Ribose-5-phosphate isomerase A.